The following is a 705-amino-acid chain: Polyribonucleotide nucleotidyltransferase (705 aa).

Mg(2+) contacts are provided by D486 and D492. A KH domain is found at 553–612 (PQFHTMKVDPEKIRDIIGKGGATIRSITEETGASIDIDDDGTVKIYGDDGDSLQGAINRI). One can recognise an S1 motif domain in the interval 622 to 690 (GEVYKGKVVR…QRGRIKLSIK (69 aa)).

The protein belongs to the polyribonucleotide nucleotidyltransferase family. As to quaternary structure, component of the RNA degradosome, which is a multiprotein complex involved in RNA processing and mRNA degradation. Mg(2+) is required as a cofactor.

It is found in the cytoplasm. It catalyses the reaction RNA(n+1) + phosphate = RNA(n) + a ribonucleoside 5'-diphosphate. Involved in mRNA degradation. Catalyzes the phosphorolysis of single-stranded polyribonucleotides processively in the 3'- to 5'-direction. In Teredinibacter turnerae (strain ATCC 39867 / T7901), this protein is Polyribonucleotide nucleotidyltransferase.